We begin with the raw amino-acid sequence, 395 residues long: DDB1- and CUL4-associated factor 4-like protein 2 (395 aa).

2 WD repeats span residues serine 268–glutamine 307 and valine 312–threonine 351.

This chain is DDB1- and CUL4-associated factor 4-like protein 2 (DCAF4L2), found in Homo sapiens (Human).